The sequence spans 505 residues: 2,3-bisphosphoglycerate-independent phosphoglycerate mutase (505 aa).

Mn(2+) contacts are provided by Asp13 and Ser63. Residue Ser63 is the Phosphoserine intermediate of the active site. Residues His124, 153–154 (RD), Arg183, Arg189, 254–257 (RADR), and Lys329 contribute to the substrate site. Asp395, His399, Asp436, His437, and His455 together coordinate Mn(2+).

The protein belongs to the BPG-independent phosphoglycerate mutase family. As to quaternary structure, monomer. Mn(2+) serves as cofactor.

The catalysed reaction is (2R)-2-phosphoglycerate = (2R)-3-phosphoglycerate. Its pathway is carbohydrate degradation; glycolysis; pyruvate from D-glyceraldehyde 3-phosphate: step 3/5. Its function is as follows. Catalyzes the interconversion of 2-phosphoglycerate and 3-phosphoglycerate. In Agrobacterium fabrum (strain C58 / ATCC 33970) (Agrobacterium tumefaciens (strain C58)), this protein is 2,3-bisphosphoglycerate-independent phosphoglycerate mutase.